Reading from the N-terminus, the 102-residue chain is Small ribosomal subunit protein eS24 (102 aa).

Belongs to the eukaryotic ribosomal protein eS24 family.

The sequence is that of Small ribosomal subunit protein eS24 from Methanococcus maripaludis (strain C7 / ATCC BAA-1331).